We begin with the raw amino-acid sequence, 246 residues long: Pyridoxine 5'-phosphate synthase (246 aa).

N7 lines the 3-amino-2-oxopropyl phosphate pocket. 9–10 serves as a coordination point for 1-deoxy-D-xylulose 5-phosphate; sequence DH. A 3-amino-2-oxopropyl phosphate-binding site is contributed by R18. The active-site Proton acceptor is H43. 1-deoxy-D-xylulose 5-phosphate is bound by residues R45 and H50. E70 acts as the Proton acceptor in catalysis. Residue T100 coordinates 1-deoxy-D-xylulose 5-phosphate. Catalysis depends on H190, which acts as the Proton donor. 3-amino-2-oxopropyl phosphate contacts are provided by residues G191 and 212 to 213; that span reads GH.

Belongs to the PNP synthase family. As to quaternary structure, homooctamer; tetramer of dimers.

The protein resides in the cytoplasm. The catalysed reaction is 3-amino-2-oxopropyl phosphate + 1-deoxy-D-xylulose 5-phosphate = pyridoxine 5'-phosphate + phosphate + 2 H2O + H(+). The protein operates within cofactor biosynthesis; pyridoxine 5'-phosphate biosynthesis; pyridoxine 5'-phosphate from D-erythrose 4-phosphate: step 5/5. In terms of biological role, catalyzes the complicated ring closure reaction between the two acyclic compounds 1-deoxy-D-xylulose-5-phosphate (DXP) and 3-amino-2-oxopropyl phosphate (1-amino-acetone-3-phosphate or AAP) to form pyridoxine 5'-phosphate (PNP) and inorganic phosphate. This is Pyridoxine 5'-phosphate synthase from Bordetella petrii (strain ATCC BAA-461 / DSM 12804 / CCUG 43448).